Consider the following 183-residue polypeptide: Ribosome maturation factor RimM (183 aa).

The PRC barrel domain maps to 102-183 (DDDFYWHQLE…CITVDWDPEF (82 aa)).

This sequence belongs to the RimM family. Binds ribosomal protein uS19.

The protein resides in the cytoplasm. An accessory protein needed during the final step in the assembly of 30S ribosomal subunit, possibly for assembly of the head region. Essential for efficient processing of 16S rRNA. May be needed both before and after RbfA during the maturation of 16S rRNA. It has affinity for free ribosomal 30S subunits but not for 70S ribosomes. The chain is Ribosome maturation factor RimM from Saccharophagus degradans (strain 2-40 / ATCC 43961 / DSM 17024).